We begin with the raw amino-acid sequence, 724 residues long: Solute carrier organic anion transporter family member 4C1 (724 aa).

Residues 1-105 (MKSAKGIENL…QCLQRCNTPG (105 aa)) lie on the Cytoplasmic side of the membrane. A phosphoserine mark is found at serine 15, serine 16, serine 24, serine 26, and serine 28. Residues 24–71 (SASPSQVEVSALSSDPQRENSQPQELQKPQEPQKSPEPSLPSAPPNVS) form a disordered region. The segment covering 25-38 (ASPSQVEVSALSSD) has biased composition (polar residues). Residues 44 to 60 (SQPQELQKPQEPQKSPE) show a composition bias toward low complexity. Residues 106–126 (GFLLHYCLLAVTQGIVVNGLV) form a helical membrane-spanning segment. Residues 127 to 145 (NISISTIEKRYEMKSSLTG) lie on the Extracellular side of the membrane. Residues 146–166 (LISSSYDISFCLLSLFVSFFG) traverse the membrane as a helical segment. Residues 167-172 (ERGHKP) lie on the Cytoplasmic side of the membrane. Residues 173 to 197 (RWLAFAAFMIGLGALVFSLPQFFSG) form a helical membrane-spanning segment. At 198 to 224 (EYKLGSLFEDTCVTTRNSTSCTSSTSS) the chain is on the extracellular side. Residues 225-254 (LSNYLYVFILGQLLLGAGGTPLYTLGTAFL) form a helical membrane-spanning segment. Over 255 to 274 (DDSVPTHKSSLYIGTGYAMS) the chain is Cytoplasmic. The chain crosses the membrane as a helical span at residues 275-295 (ILGPAIGYVLGGQLLTIYVDV). Residues 296 to 311 (AMGESTDITEDDPRWL) lie on the Extracellular side of the membrane. Residues 312–336 (GAWWIGFLLSWIFAWSLIIPFSCFP) form a helical membrane-spanning segment. Residues 337 to 377 (KHLPGTAEIQAGKTSQAHQSNSNADAKFGKSIKDFPAALKN) lie on the Cytoplasmic side of the membrane. The chain crosses the membrane as a helical span at residues 378-399 (LMKNAVFMCLVLSTSSEALITT). Over 400–419 (GFATFLPKFIENQFGLTSSF) the chain is Extracellular. Residues 420-443 (AATLGGAVLIPGAALGQILGGFLV) traverse the membrane as a helical segment. Residues 444–447 (SKFK) are Cytoplasmic-facing. A helical transmembrane segment spans residues 448–471 (MTCKNTMKFALFTSGVALTLSFVF). Residues 472–580 (IYAKCGNEPF…ETHCAKLPIF (109 aa)) are Extracellular-facing. Positions 495–549 (GNLIAPCNANCNCLRSYYYPVCGDGVQYFSPCFAGCSNSVAHRKPKVYYNCSCIE) constitute a Kazal-like domain. 3 disulfides stabilise this stretch: cysteine 501–cysteine 530, cysteine 507–cysteine 526, and cysteine 516–cysteine 547. Residues 581–603 (LCIFFIVIIFTFMAGTPITVSIL) form a helical membrane-spanning segment. Residues 604–612 (RCVNHRQRS) are Cytoplasmic-facing. A helical membrane pass occupies residues 613–638 (LALGIQFMVLRLLGTIPGPIIFGFTI). Topologically, residues 639-672 (DSTCILWDINDCGIKGACRIYDNIKMAHMLVAIS) are extracellular. A helical transmembrane segment spans residues 673 to 690 (VTCKVITMFFNGFAIFLY). At 691–724 (KPPPSATDLSFHKENAVVTNVLAEQDLNKIVKEG) the chain is on the cytoplasmic side.

This sequence belongs to the organo anion transporter (TC 2.A.60) family.

It is found in the basolateral cell membrane. The enzyme catalyses estrone 3-sulfate(out) = estrone 3-sulfate(in). It carries out the reaction L-thyroxine(out) = L-thyroxine(in). The catalysed reaction is 3,3',5-triiodo-L-thyronine(out) = 3,3',5-triiodo-L-thyronine(in). It catalyses the reaction chenodeoxycholate(out) = chenodeoxycholate(in). The enzyme catalyses glycocholate(out) = glycocholate(in). It carries out the reaction L-homoarginine(in) = L-homoarginine(out). The catalysed reaction is L-arginine(in) = L-arginine(out). It catalyses the reaction N(omega),N(omega)-dimethyl-L-arginine(out) = N(omega),N(omega)-dimethyl-L-arginine(in). Functionally, mediates the transport of organic anions such as steroids (estrone 3-sulfate, chenodeoxycholate, glycocholate) and thyroid hormones (3,3',5-triiodo-L-thyronine (T3), L-thyroxine (T4)), in the kidney. Capable of transporting cAMP and pharmacological substances such as digoxin, ouabain and methotrexate. Transport is independent of sodium, chloride ion, and ATP. Transport activity is stimulated by an acidic extracellular environment due to increased substrate affinity to the transporter. The driving force for this transport activity is currently not known. The role of hydrogencarbonate (HCO3(-), bicarbonate) as the probable counteranion that exchanges for organic anions is still not well defined. Functions as an uptake transporter at the apical membrane, suggesting a role in renal reabsorption. Involved in the renal secretion of the uremic toxin ADMA (N(omega),N(omega)-dimethyl-L-arginine or asymmetrical dimethylarginine), which is associated to cardiovascular events and mortality, and the structurally related amino acids L-arginine and L-homoarginine (a cardioprotective biomarker). Can act bidirectionally, suggesting a dual protective role of this transport protein; exporting L-homoarginine after being synthesized in proximal tubule cells, and mediating uptake of ADMA from the blood into proximal tubule cells where it is degraded by the enzyme dimethylarginine dimethylaminohydrolase 1 (DDAH1). May be involved in sperm maturation by enabling directed movement of organic anions and compounds within or between cells. This ion-transporting process is important to maintain the strict epididymal homeostasis necessary for sperm maturation. May have a role in secretory functions since seminal vesicle epithelial cells are assumed to secrete proteins involved in decapacitation by modifying surface proteins to facilitate the acquisition of the ability to fertilize the egg. This is Solute carrier organic anion transporter family member 4C1 from Pongo abelii (Sumatran orangutan).